The chain runs to 361 residues: DNA replication and repair protein RecF (361 aa).

Residue 30–37 (GPNGSGKT) participates in ATP binding.

This sequence belongs to the RecF family.

It localises to the cytoplasm. The RecF protein is involved in DNA metabolism; it is required for DNA replication and normal SOS inducibility. RecF binds preferentially to single-stranded, linear DNA. It also seems to bind ATP. The chain is DNA replication and repair protein RecF from Yersinia pseudotuberculosis serotype IB (strain PB1/+).